The chain runs to 630 residues: Subtilisin-like protease 1 (630 aa).

A signal peptide spans 1–25; it reads MVLTRRAALLLCPWVIQLVIKRTLA. The propeptide at 26 to 202 is inhibition peptide; it reads GDILPNEGKK…IESDKLVGAD (177 aa). The segment at 72–125 is disordered; it reads NAYNPDRDAPKEELQKLQDQQETPSKQPNNLRNSPQKRAEKKESPGKNKKSLRL. Residues 76–87 show a composition bias toward basic and acidic residues; that stretch reads PDRDAPKEELQK. The span at 94–107 shows a compositional bias: polar residues; it reads TPSKQPNNLRNSPQ. Residues 108–117 are compositionally biased toward basic and acidic residues; that stretch reads KRAEKKESPG. Glu-129, Asn-130, Thr-133, Pro-135, and Gly-190 together coordinate Ca(2+). The interval 230–254 is disordered; it reads LEVPSGESPPSHAASSGSPFDDDDD. Positions 233–248 are enriched in low complexity; that stretch reads PSGESPPSHAASSGSP. Residue Asp-281 participates in Ca(2+) binding. A Peptidase S8 domain is found at 287-604; that stretch reads QWGLDLARLD…GGYVDILRAV (318 aa). Disulfide bonds link Cys-313/Cys-423, Cys-402/Cys-419, and Cys-465/Cys-478. The Charge relay system role is filled by Asp-316. Positions 325, 336, 340, 343, 344, 345, 346, 348, 350, 352, and 353 each coordinate Ca(2+). His-372 (charge relay system) is an active-site residue. Val-383, Asn-386, Ile-388, and Ile-390 together coordinate Ca(2+). The N-linked (GlcNAc...) asparagine glycan is linked to Asn-546. Catalysis depends on Ser-549, which acts as the Charge relay system.

This sequence belongs to the peptidase S8 family. Heterodimer between p54 form and prodomain p31; the interaction inhibits p54 catalytic activity. Heterodimer p31-p54 is monomeric at basic pH and dimeric at acidic pH; dimerization is driven by the N-terminal prodomain (p31). Requires Ca(2+) as cofactor. The prodomain (p31) is cleaved, probably by autocatalysis, and remains non-covalently associated with the p54 form as an inhibitor. p54 is further cleaved into the p45/p47 forms. In terms of processing, the relevance of the N-glycosylation is not clear. In an insect expression system, SUB1 glycosylation appears to affect its processing into the active mature form suggesting that SUB1 may not be N-glycosylated in parasites.

The protein resides in the secreted. Its subcellular location is the parasitophorous vacuole lumen. It carries out the reaction Hydrolysis of proteins with broad specificity for peptide bonds, and a preference for a large uncharged residue in P1. Hydrolyzes peptide amides.. With respect to regulation, inhibited by peptidic alpha-ketoamide inhibitors. Inhibited by the alpha-ketoamide nonapeptide JMV5126 (isocaproyl-KITAQ(CO)DDEE-NH2). Inhibited by the alpha-ketoamide peptide MAM-117. Functionally, serine protease which plays an essential role in merozoite invasion of and egress from host erythrocytes by processing and activating various merozoite surface and parasitophorous vacuole proteins. The protein is Subtilisin-like protease 1 of Plasmodium vivax.